The chain runs to 560 residues: Membrane protein insertase YidC (560 aa).

A run of 6 helical transmembrane segments spans residues 5 to 25 (IINLIAAIILSLSIIFGWQYF), 334 to 354 (AIDFGWFYIITKPVFYAMNFF), 357 to 377 (YVGNFGVSILIVTVIIKLLMF), 431 to 451 (LPILVQIPVFFSIYKVLYVTI), 476 to 496 (LFGLLPFSPPSFLMIGAWPIL), and 522 to 542 (FMPLIFLFMFSSFPVGLLIYW).

This sequence belongs to the OXA1/ALB3/YidC family. Type 1 subfamily. In terms of assembly, interacts with the Sec translocase complex via SecD. Specifically interacts with transmembrane segments of nascent integral membrane proteins during membrane integration.

It is found in the cell inner membrane. Functionally, required for the insertion and/or proper folding and/or complex formation of integral membrane proteins into the membrane. Involved in integration of membrane proteins that insert both dependently and independently of the Sec translocase complex, as well as at least some lipoproteins. Aids folding of multispanning membrane proteins. The protein is Membrane protein insertase YidC of Rickettsia conorii (strain ATCC VR-613 / Malish 7).